Consider the following 418-residue polypeptide: MTYLEIEGTNHLSGNVTISGAKNAALPLIVSSILAKNEVKINNVPNVADIKTLISLLENLGAKVNFQNNSALLNTNTLNQTIAKYDIVRKMRASILTLGPLLARFGHCEVSLPGGCAIGQRPIDLHLLALEKMGANIQIKQGYVVASGNLKGNEILFDKITVTGSENIIMAAALAKGKTKLLNVAKEPEVVQLCEVLKDAGLEIKGIGTDELEIYGSDGELLEFKEFSVIPDRIEAGTYLCAGAITNSKITLDKVNATHLSAVLAKLHQMGFETLITEDSITLLPAKEIKPVEIMTSEYPGFPTDMQAQFMALALKANGTSIIDERLFENRFMHVSELLRMGADIKLNGHIATIVGGKELNAADVMATDLRASSALILAALAAKGTSKVHRIYHLDRGYENLEEKFKDLGAKITRLEE.

A phosphoenolpyruvate-binding site is contributed by K22–N23. R92 contacts UDP-N-acetyl-alpha-D-glucosamine. Residue C116 is the Proton donor of the active site. C116 carries the 2-(S-cysteinyl)pyruvic acid O-phosphothioketal modification. Residues R121 to L125, D305, and L327 each bind UDP-N-acetyl-alpha-D-glucosamine.

This sequence belongs to the EPSP synthase family. MurA subfamily.

Its subcellular location is the cytoplasm. The enzyme catalyses phosphoenolpyruvate + UDP-N-acetyl-alpha-D-glucosamine = UDP-N-acetyl-3-O-(1-carboxyvinyl)-alpha-D-glucosamine + phosphate. The protein operates within cell wall biogenesis; peptidoglycan biosynthesis. Cell wall formation. Adds enolpyruvyl to UDP-N-acetylglucosamine. The polypeptide is UDP-N-acetylglucosamine 1-carboxyvinyltransferase (Campylobacter jejuni subsp. jejuni serotype O:23/36 (strain 81-176)).